The sequence spans 1113 residues: MQQNSEFLTETPGSDPHISQLHANSVMESQLLDDFLLNGSPMYQDDSMAHINIDEGANFQNFIKTDEGDSPNLLSFEGIGNNTHVNQNVSTPLEEEMESNRALKEEEEDEHENKVFNEKNIGNPAHDEIVFGRKETIQSVYINPLDYLKVNAAQLPLDVEVSGLPQVSRVENQLKLKVKITSETPLNQSMLYLPSDSISREKFYLKKNIEDFSEDFKKNLLYINAFVLCAVSNRTTNVCTKCVKREQRRAARRKSGIADNLLWCNNINRRLVVFNNKQVFPIMKTFDNVKEFELTTRLVCYCRHHKANNGFVILFTITDWQNRLLGKFTTTPIMITDRKPANMDTTKFNNTTTSSRRQLTEEESTTEYYSTDNNQLSKDENMPFQYTYQHNPYDNDSQMNNIPLKDKNVPFPYSISQQTDLLQNNNLSLNLSLPNQHIPSPTSMSEEGSESFNYHHRDNDNPVRTISLTNIEQQSQLNQRKRARNNLENDIGKPLFKHSFSNSISATNTMNPALHSMQDFSMKNNNNNLPSINRVIPSQGPINGGIEVTLLGCNFKDGLSVKFGSNLALSTQCWSETTIVTYLPPAAYAGQVFVSITDTNNENNNDDLPQEIEINDNKKAIFTYVDDTDRQLIELALQIVGLKMNGKLEDARNIAKRIVGNDSPDSGTNGNSCSKSTGPSPNQHSMNLNTSVLYSDEVLIQKVIKSLNINSNISICDSLGRTLLHLACLKNYSSLVYTLIKKGARVNDIDSFGLTPLHFACISGDPKIIKMLLNCKVNYSLRSHNGLTAREVFIANHIHSKEIDKKQDNRDNHKFVHNDTYISEVLSLFEEFQNGTKFTDSVETDSNYSISRKYSQSSFNSSLLDNESLNENLFESQSMINPTSMEIQHPTLQLFENSSYSEYDQSDFEEDGDEDLFVTDEVEKPGVACREEQSELLDIGSSANEPEEDNGSTSLWNRVLHRINDDLPKYEDLFPLSWGKDDKLKTTNQDSIVEQSASNIENSENSEEEDYEEEEEFLKKQFNRFFQNKQNFRNDKMLIFFWIPLTLLLLTWFIMYKFGNQDSSINHISELISEYLRIALAKFLLGNERMKTAFRSKLSNLQTTRMLNDLIVS.

The tract at residues 91 to 114 (TPLEEEMESNRALKEEEEDEHENK) is disordered. A Phosphoserine modification is found at S255. Polar residues-rich tracts occupy residues 344-357 (DTTK…SSRR) and 437-452 (HIPS…SESF). 2 disordered regions span residues 344–376 (DTTK…NNQL) and 437–462 (HIPS…NDNP). S467 carries the phosphoserine modification. Residues 530-610 (PSINRVIPSQ…NENNNDDLPQ (81 aa)) form the IPT/TIG domain. The interval 658-687 (IVGNDSPDSGTNGNSCSKSTGPSPNQHSMN) is disordered. Residues 663–687 (SPDSGTNGNSCSKSTGPSPNQHSMN) are compositionally biased toward polar residues. 2 ANK repeats span residues 719–748 (LGRT…RVND) and 752–781 (FGLT…NYSL). The helical transmembrane segment at 1037 to 1054 (MLIFFWIPLTLLLLTWFI) threads the bilayer.

The protein resides in the membrane. This chain is Protein MGA2 (MGA2), found in Saccharomyces cerevisiae (strain ATCC 204508 / S288c) (Baker's yeast).